The primary structure comprises 209 residues: APC/C-CDH1 modulator 1 (209 aa).

Positions 1–38 (MISPSKKRTILSSKNINQKPRAVVKGNELRSPSKRRSQ) are disordered. Position 48 is a phosphoserine (serine 48). Threonine 161 is subject to Phosphothreonine. Serine 202 carries the post-translational modification Phosphoserine.

In terms of assembly, interacts with CDH1, BMH1 and BMH2.

Functionally, negative regulator of GDH1, the activator protein that regulates the ubiquitin ligase activity and substrate specificity of the anaphase promoting complex/cyclosome (APC/C), and which is required for exit from mitosis, cytokinesis and formation of prereplicative complexes in G1. The polypeptide is APC/C-CDH1 modulator 1 (ACM1) (Saccharomyces cerevisiae (strain ATCC 204508 / S288c) (Baker's yeast)).